The chain runs to 179 residues: Large ribosomal subunit protein uL6 (179 aa).

It belongs to the universal ribosomal protein uL6 family. Part of the 50S ribosomal subunit.

Functionally, this protein binds to the 23S rRNA, and is important in its secondary structure. It is located near the subunit interface in the base of the L7/L12 stalk, and near the tRNA binding site of the peptidyltransferase center. This chain is Large ribosomal subunit protein uL6, found in Persephonella marina (strain DSM 14350 / EX-H1).